The sequence spans 96 residues: UPF0251 protein VPA0321 (96 aa).

The protein belongs to the UPF0251 family.

This is UPF0251 protein VPA0321 from Vibrio parahaemolyticus serotype O3:K6 (strain RIMD 2210633).